The sequence spans 963 residues: Low-density lipoprotein receptor-related protein 8 (963 aa).

Residues 1–32 (MGLPEPGPLRLLALLLLLLLLLLLQLQHLAAA) form the signal peptide. The Extracellular portion of the chain corresponds to 42–826 (GPAKDCEKDQ…SKMGSTVTAA (785 aa)). LDL-receptor class A domains are found at residues 46 to 82 (DCEK…DDCP), 85 to 123 (TCAD…ATCT), 126 to 164 (VCPA…AGCA), 166 to 202 (LCAP…RGCA), 205 to 246 (ACGP…ELCG), 258 to 295 (ACAT…ADCP), and 298 to 334 (TCRG…AGCL). Intrachain disulfides connect cysteine 47–cysteine 59, cysteine 54–cysteine 72, cysteine 66–cysteine 81, cysteine 86–cysteine 98, cysteine 93–cysteine 111, cysteine 105–cysteine 122, cysteine 127–cysteine 141, cysteine 134–cysteine 154, cysteine 148–cysteine 163, cysteine 167–cysteine 179, cysteine 174–cysteine 192, cysteine 186–cysteine 201, cysteine 206–cysteine 221, cysteine 213–cysteine 234, cysteine 228–cysteine 245, cysteine 259–cysteine 272, cysteine 267–cysteine 285, cysteine 279–cysteine 294, cysteine 299–cysteine 311, cysteine 306–cysteine 324, cysteine 318–cysteine 333, cysteine 340–cysteine 351, cysteine 347–cysteine 360, cysteine 362–cysteine 374, cysteine 380–cysteine 390, cysteine 386–cysteine 399, and cysteine 401–cysteine 414. Residues tryptophan 64, aspartate 67, aspartate 69, aspartate 71, aspartate 77, and glutamate 78 each coordinate Ca(2+). The N-linked (GlcNAc...) asparagine glycan is linked to asparagine 176. The EGF-like 1 domain maps to 336–375 (GLNECLHNNGGCSHICTDLKIGFECTCPAGFQLLDQKTCG). Positions 376-415 (DIDECKDPDACSQICVNYKGYFKCECYPGYEMDLLTKNCK) constitute an EGF-like 2; calcium-binding domain. Residue asparagine 441 is glycosylated (N-linked (GlcNAc...) asparagine). 5 LDL-receptor class B repeats span residues 462–508 (NRIY…DWVH), 509–551 (KHIY…DPLR), 552–595 (GFMY…DLLS), 596–639 (QRLY…VFED), and 640–681 (KVFW…FHEL). N-linked (GlcNAc...) asparagine glycans are attached at residues asparagine 518 and asparagine 538. The interval 740–798 (STSTTTLASTMTRTVPATTRAPGTTVHRSTYQNHSTETPSLTAAVPSSVSVPRAPSISP) is clustered O-linked oligosaccharides. The segment at 754–815 (VPATTRAPGT…SNHSQHYANE (62 aa)) is disordered. A compositionally biased stretch (polar residues) spans 765-777 (VHRSTYQNHSTET). Asparagine 772 carries an N-linked (GlcNAc...) asparagine glycan. A compositionally biased stretch (low complexity) spans 778-799 (PSLTAAVPSSVSVPRAPSISPS). Positions 800–812 (TLSPATSNHSQHY) are enriched in polar residues. N-linked (GlcNAc...) asparagine glycosylation occurs at asparagine 807. Residues 827–847 (VIGIIVPIVVIALLCMSGYLI) form a helical membrane-spanning segment. The Cytoplasmic portion of the chain corresponds to 848–963 (WRNWKRKNTK…ALSLEDDGLP (116 aa)).

It belongs to the LDLR family. As to quaternary structure, homooligomer. Interacts with VLDLR. Reelin associates with two or more receptor molecules. Interacts with DAB1 and JNK-interacting proteins. Interacts with SNX17. Interacts with PCSK9. Interacts with MDK; this interaction is calcium dependent. Interacts with CLU. In terms of assembly, (Microbial infection) Interacts with Semliki Forest virus E2-E1 heterodimer; this interaction mediates viral entry to host cell. (Microbial infection) Interacts (via class A repeats) with Eastern equine encephalitis virus spike glycoprotein E2; this interaction mediates viral entry into host cell. In terms of processing, O-glycosylated. Some alternatively spliced isoforms lack the O-linked sugar domain. Undergoes sequential, furin and gamma-secretase dependent, proteolytic processing, resulting in the extracellular release of the entire ligand-binding domain as a soluble polypeptide and in the intracellular domain (ICD) release into the cytoplasm. The gamma-secretase-dependent proteolytical processing occurs after the bulk of the extracellular domain has been shed, in a furin-dependent manner, in alternatively spliced isoforms carrying the furin cleavage site. Hypoglycosylation (mainly hypo-O-glycosylation) leads to increased extracellular cleavage, which in turn results in accelerating release of the intracellular domain (ICD) by the gamma-secretase. The resulting receptor fragment is able to inhibit Reelin signaling and in particular the Reelin-induced DAB1 phosphorylation. Post-translationally, tyrosine phosphorylated upon apoE binding. In terms of processing, ubiquitinated by MYLIP leading to degradation. As to expression, expressed mainly in brain and placenta. Also expressed in platelets and megakaryocytic cells. Not expressed in the liver.

Its subcellular location is the cell membrane. The protein resides in the secreted. In terms of biological role, cell surface receptor for Reelin (RELN) and apolipoprotein E (apoE)-containing ligands. LRP8 participates in transmitting the extracellular Reelin signal to intracellular signaling processes, by binding to DAB1 on its cytoplasmic tail. Reelin acts via both the VLDL receptor (VLDLR) and LRP8 to regulate DAB1 tyrosine phosphorylation and microtubule function in neurons. LRP8 has higher affinity for Reelin than VLDLR. LRP8 is thus a key component of the Reelin pathway which governs neuronal layering of the forebrain during embryonic brain development. Binds the endoplasmic reticulum resident receptor-associated protein (RAP). Binds dimers of beta 2-glycoprotein I and may be involved in the suppression of platelet aggregation in the vasculature. Highly expressed in the initial segment of the epididymis, where it affects the functional expression of clusterin and phospholipid hydroperoxide glutathione peroxidase (PHGPx), two proteins required for sperm maturation. May also function as an endocytic receptor. Not required for endocytic uptake of SEPP1 in the kidney which is mediated by LRP2. Together with its ligand, apolipoprotein E (apoE), may indirectly play a role in the suppression of the innate immune response by controlling the survival of myeloid-derived suppressor cells. Its function is as follows. (Microbial infection) Acts as a receptor for Semliki Forest virus. This is Low-density lipoprotein receptor-related protein 8 (LRP8) from Homo sapiens (Human).